The chain runs to 270 residues: Ribosomal RNA-processing protein 7 homolog (270 aa).

Positions 233–268 form a coiled coil; it reads TFQIKKNRQEKAQELLKKFEEDRKRITQLKQARNFK.

It belongs to the RRP7 family.

The chain is Ribosomal RNA-processing protein 7 homolog from Caenorhabditis elegans.